The chain runs to 529 residues: Delayed-rectifier potassium channel regulatory subunit KCNS1 (529 aa).

Topologically, residues 1 to 217 are cytoplasmic; that stretch reads MLMLLVRGTR…LTMENPGYSL (217 aa). Residues 218–239 traverse the membrane as a helical segment; it reads PSKLFSCVSISVVLASIAAMCI. Over 240–270 the chain is Extracellular; that stretch reads HSLPEYQAREAAAAVAAVAAGRSAEGVRDDP. Residues 271–293 traverse the membrane as a helical segment; that stretch reads VLRRLEYFCIAWFSFEVSSRLLL. Residues 294-304 are Cytoplasmic-facing; sequence APSTRNFFCHP. Residues 305–322 form a helical membrane-spanning segment; the sequence is LNLIDIVSVLPFYLTLLA. The Extracellular segment spans residues 323–340; sequence GAALGDHGGTGGKEFGHL. Residues 341–361 form a helical; Voltage-sensor membrane-spanning segment; that stretch reads GKVVQVFRLMRIFRVLKLARH. The Cytoplasmic segment spans residues 362-376; that stretch reads STGLRSLGATLKHSY. The chain crosses the membrane as a helical span at residues 377-398; sequence REVGILLLYLAVGVSVFSGVAY. Residues 399-411 are Extracellular-facing; the sequence is TAEKEEHVGFDTI. Positions 412 to 423 form an intramembrane region, helical; it reads PACWWWGTVSMT. Residues 424 to 429 carry the Selectivity filter motif; it reads TVGYGD. An intramembrane segment occupies 424–431; sequence TVGYGDVV. Residues 432–438 are Extracellular-facing; the sequence is PVTVAGK. The chain crosses the membrane as a helical span at residues 439 to 467; it reads LAASGCILGGILVVALPITIIFNKFSHFY. Residues 468 to 529 are Cytoplasmic-facing; that stretch reads RRQKALEAAV…PSEPPHSQMY (62 aa). The segment at 494–529 is disordered; the sequence is GVSEASLETSRETSQEGRSADLETQVPSEPPHSQMY. Residues 502–514 show a composition bias toward basic and acidic residues; sequence TSRETSQEGRSAD.

Belongs to the potassium channel family. S (TC 1.A.1.2) subfamily. Kv9.1/KCNS1 sub-subfamily. In terms of assembly, heterotetramer with KCNB1. Heterotetramer with KCNB2. Does not form homomultimers.

It localises to the cell membrane. Potassium channel regulatory subunit that modulate the delayed rectifier voltage-gated potassium channel activity of KCNB1 and KCNB2 by altering their kinetics, expression levels, and shifting the half-inactivation potential to more polarized values. While it does not form functional channels on its own, it can form functional heterotetrameric channels with KCNB1 and KCNB2. Each regulatory subunit has unique regulatory properties that can lead to extensive inhibition, significant changes in kinetics, and/or substantial shifts in the voltage dependencies of the inactivation process. The sequence is that of Delayed-rectifier potassium channel regulatory subunit KCNS1 from Aotus nancymaae (Ma's night monkey).